The following is a 68-amino-acid chain: Conotoxin Eb11.7 (68 aa).

The N-terminal stretch at 1 to 26 (MMFRLTSVSCFLLVIVCLNLFQVVLT) is a signal peptide. 4 disulfide bridges follow: cysteine 29–cysteine 43, cysteine 36–cysteine 48, cysteine 42–cysteine 52, and cysteine 47–cysteine 56. Phenylalanine 60 bears the Phenylalanine amide mark. The propeptide occupies 64–68 (ATFQE).

Belongs to the conotoxin I2 superfamily. Expressed by the venom duct.

Its subcellular location is the secreted. This Conus eburneus (Ivory cone) protein is Conotoxin Eb11.7.